Reading from the N-terminus, the 541-residue chain is Chaperonin GroEL (541 aa).

ATP is bound by residues threonine 29 to proline 32, lysine 50, aspartate 86 to threonine 90, glycine 416, and aspartate 498.

Belongs to the chaperonin (HSP60) family. In terms of assembly, forms a cylinder of 14 subunits composed of two heptameric rings stacked back-to-back. Interacts with the co-chaperonin GroES.

It is found in the cytoplasm. It carries out the reaction ATP + H2O + a folded polypeptide = ADP + phosphate + an unfolded polypeptide.. Functionally, together with its co-chaperonin GroES, plays an essential role in assisting protein folding. The GroEL-GroES system forms a nano-cage that allows encapsulation of the non-native substrate proteins and provides a physical environment optimized to promote and accelerate protein folding. The chain is Chaperonin GroEL from Anaplasma phagocytophilum (Ehrlichia phagocytophila).